The chain runs to 101 residues: Urease subunit gamma (101 aa).

It belongs to the urease gamma subunit family. As to quaternary structure, heterotrimer of UreA (gamma), UreB (beta) and UreC (alpha) subunits. Three heterotrimers associate to form the active enzyme.

It is found in the cytoplasm. It catalyses the reaction urea + 2 H2O + H(+) = hydrogencarbonate + 2 NH4(+). It participates in nitrogen metabolism; urea degradation; CO(2) and NH(3) from urea (urease route): step 1/1. The chain is Urease subunit gamma from Geobacillus kaustophilus (strain HTA426).